The sequence spans 556 residues: Formate--tetrahydrofolate ligase (556 aa).

Position 65 to 72 (threonine 65 to threonine 72) interacts with ATP.

This sequence belongs to the formate--tetrahydrofolate ligase family.

It catalyses the reaction (6S)-5,6,7,8-tetrahydrofolate + formate + ATP = (6R)-10-formyltetrahydrofolate + ADP + phosphate. It participates in one-carbon metabolism; tetrahydrofolate interconversion. In Proteus mirabilis (strain HI4320), this protein is Formate--tetrahydrofolate ligase.